The following is a 119-amino-acid chain: uncharacterized protein (119 aa).

Residues 63 to 104 (KKIKKELESNSEKRKAALQMIKEEHTAKVDRYKMIIEDLRQQ) are a coiled coil.

This is an uncharacterized protein from Bacillus subtilis (strain 168).